The following is a 378-amino-acid chain: Glutamate 5-kinase (378 aa).

Lys-19 serves as a coordination point for ATP. The substrate site is built by Ser-60, Asp-147, and Asn-159. ATP-binding positions include 179 to 180 and 221 to 227; these read SD and SGGMRTK. The region spanning 285-362 is the PUA domain; it reads KGTLTIDAGA…GEMEQLLGYR (78 aa).

This sequence belongs to the glutamate 5-kinase family.

The protein resides in the cytoplasm. The enzyme catalyses L-glutamate + ATP = L-glutamyl 5-phosphate + ADP. It participates in amino-acid biosynthesis; L-proline biosynthesis; L-glutamate 5-semialdehyde from L-glutamate: step 1/2. Functionally, catalyzes the transfer of a phosphate group to glutamate to form L-glutamate 5-phosphate. This Gluconobacter oxydans (strain 621H) (Gluconobacter suboxydans) protein is Glutamate 5-kinase.